Reading from the N-terminus, the 746-residue chain is Double-stranded RNA-specific editase B2 (746 aa).

Disordered regions lie at residues 1–36 (MASV…KDKV) and 50–105 (SPGT…PLEE). Basic residues predominate over residues 20 to 34 (CKSKRRRRRRSKRKD). Residues 23–35 (KRRRRRRSKRKDK) are R-domain (ssRNA-binding). 2 DRBM domains span residues 126–192 (TPKN…SFVQ) and 284–348 (NPVV…ALFD). Positions 415–742 (VLSSGTKCIS…VRKPPEQDQF (328 aa)) constitute an A to I editase domain. His439 contacts Zn(2+). The Proton donor role is filled by Glu441. The Zn(2+) site is built by Cys497 and Cys562.

Brain specific.

It is found in the nucleus. In terms of biological role, lacks editing activity. It prevents the binding of other ADAR enzymes to targets in vitro, and decreases the efficiency of these enzymes. Capable of binding to dsRNA but also to ssRNA. This Rattus norvegicus (Rat) protein is Double-stranded RNA-specific editase B2 (Adarb2).